We begin with the raw amino-acid sequence, 88 residues long: Kunitz-type kappaPI-theraphotoxin-Hs1c (88 aa).

Positions 1–27 are cleaved as a signal peptide; that stretch reads MGIARILSAVLFLSVLFVVTFPALLSA. The propeptide occupies 28–33; sequence DHHDGR. Positions 37–85 constitute a BPTI/Kunitz inhibitor domain; that stretch reads CRLPSDRGRCKASFECWYFNGRTCAKFIYGGCGGNGNKFPTQEACMKRC. 3 disulfides stabilise this stretch: C37–C85, C46–C68, and C60–C81.

This sequence belongs to the venom Kunitz-type family. 02 (native) subfamily. As to expression, expressed by the venom gland.

Its subcellular location is the secreted. Functionally, serine protease inhibitor that inhibits trypsin (Ki=0.281 nM), kallikrein (Ki=337 nM), and chymotrypsin. The sequence is that of Kunitz-type kappaPI-theraphotoxin-Hs1c from Cyriopagopus schmidti (Chinese bird spider).